A 282-amino-acid polypeptide reads, in one-letter code: 2-dehydro-3-deoxyphosphooctonate aldolase (282 aa).

It belongs to the KdsA family.

It localises to the cytoplasm. The catalysed reaction is D-arabinose 5-phosphate + phosphoenolpyruvate + H2O = 3-deoxy-alpha-D-manno-2-octulosonate-8-phosphate + phosphate. It functions in the pathway carbohydrate biosynthesis; 3-deoxy-D-manno-octulosonate biosynthesis; 3-deoxy-D-manno-octulosonate from D-ribulose 5-phosphate: step 2/3. Its pathway is bacterial outer membrane biogenesis; lipopolysaccharide biosynthesis. The polypeptide is 2-dehydro-3-deoxyphosphooctonate aldolase (Granulibacter bethesdensis (strain ATCC BAA-1260 / CGDNIH1)).